We begin with the raw amino-acid sequence, 292 residues long: Hemin import ATP-binding protein HmuV (292 aa).

The ABC transporter domain maps to 38-271 (LRADGIAVTR…ELLTRVYGHP (234 aa)). Position 70 to 77 (70 to 77 (GPNGAGKS)) interacts with ATP.

Belongs to the ABC transporter superfamily. Heme (hemin) importer (TC 3.A.1.14.5) family. In terms of assembly, the complex is composed of two ATP-binding proteins (HmuV), two transmembrane proteins (HmuU) and a solute-binding protein (HmuT).

The protein localises to the cell membrane. Part of the ABC transporter complex HmuTUV involved in hemin import. Responsible for energy coupling to the transport system. The protein is Hemin import ATP-binding protein HmuV of Rhodococcus jostii (strain RHA1).